The chain runs to 436 residues: 3-ketoacyl-CoA thiolase (436 aa).

The active-site Acyl-thioester intermediate is C99. Catalysis depends on proton acceptor residues H392 and C422.

The protein belongs to the thiolase-like superfamily. Thiolase family. As to quaternary structure, heterotetramer of two alpha chains (FadJ) and two beta chains (FadI).

The protein localises to the cytoplasm. The catalysed reaction is an acyl-CoA + acetyl-CoA = a 3-oxoacyl-CoA + CoA. It functions in the pathway lipid metabolism; fatty acid beta-oxidation. Its function is as follows. Catalyzes the final step of fatty acid oxidation in which acetyl-CoA is released and the CoA ester of a fatty acid two carbons shorter is formed. This chain is 3-ketoacyl-CoA thiolase, found in Escherichia coli O6:H1 (strain CFT073 / ATCC 700928 / UPEC).